A 195-amino-acid polypeptide reads, in one-letter code: Ribonuclease HII (195 aa).

One can recognise an RNase H type-2 domain in the interval 1 to 195 (MICGIDEAGR…SWRTLRYLNT (195 aa)). A divalent metal cation is bound by residues Asp6, Glu7, and Asp101.

This sequence belongs to the RNase HII family. Mn(2+) serves as cofactor. Mg(2+) is required as a cofactor.

It is found in the cytoplasm. The catalysed reaction is Endonucleolytic cleavage to 5'-phosphomonoester.. In terms of biological role, endonuclease that specifically degrades the RNA of RNA-DNA hybrids. This is Ribonuclease HII from Pyrobaculum islandicum (strain DSM 4184 / JCM 9189 / GEO3).